Reading from the N-terminus, the 254-residue chain is 5'-methylthioadenosine/S-adenosylhomocysteine nucleosidase (254 aa).

Met-1 carries the post-translational modification N-acetylmethionine. The active-site Proton acceptor is the Glu-25. S-methyl-5'-thioadenosine contacts are provided by residues Thr-103 and 186-189; that span reads KDME. The adenine site is built by Lys-186 and Asp-212. Residue Asp-212 is the Proton donor of the active site.

It belongs to the PNP/UDP phosphorylase family. MtnN subfamily. In terms of assembly, homodimer.

The enzyme catalyses S-methyl-5'-thioadenosine + H2O = 5-(methylsulfanyl)-D-ribose + adenine. The catalysed reaction is S-adenosyl-L-homocysteine + H2O = S-(5-deoxy-D-ribos-5-yl)-L-homocysteine + adenine. It carries out the reaction 5'-deoxyadenosine + H2O = 5-deoxy-D-ribose + adenine. The protein operates within amino-acid biosynthesis; L-methionine biosynthesis via salvage pathway; S-methyl-5-thio-alpha-D-ribose 1-phosphate from S-methyl-5'-thioadenosine (hydrolase route): step 1/2. In terms of biological role, enzyme of the methionine cycle that catalyzes the irreversible cleavage of the glycosidic bond in 5'-methylthioadenosine (MTA) and S-adenosylhomocysteine (SAH/AdoHcy) to a lesser extent, to adenine and the corresponding thioribose, 5'-methylthioribose and S-ribosylhomocysteine, respectively. Contributes to the maintenance of AdoMet homeostasis and is required to sustain high rates of ethylene synthesis. In Arabidopsis thaliana (Mouse-ear cress), this protein is 5'-methylthioadenosine/S-adenosylhomocysteine nucleosidase (MTN2).